A 286-amino-acid chain; its full sequence is 4-diphosphocytidyl-2-C-methyl-D-erythritol kinase (286 aa).

The active site involves K11. ATP is bound at residue 94–104 (PMGGGIGGGSS). D136 is a catalytic residue.

Belongs to the GHMP kinase family. IspE subfamily.

The catalysed reaction is 4-CDP-2-C-methyl-D-erythritol + ATP = 4-CDP-2-C-methyl-D-erythritol 2-phosphate + ADP + H(+). The protein operates within isoprenoid biosynthesis; isopentenyl diphosphate biosynthesis via DXP pathway; isopentenyl diphosphate from 1-deoxy-D-xylulose 5-phosphate: step 3/6. Functionally, catalyzes the phosphorylation of the position 2 hydroxy group of 4-diphosphocytidyl-2C-methyl-D-erythritol. The sequence is that of 4-diphosphocytidyl-2-C-methyl-D-erythritol kinase from Pseudomonas putida (strain ATCC 47054 / DSM 6125 / CFBP 8728 / NCIMB 11950 / KT2440).